The primary structure comprises 48 residues: Omega-agatoxin-Aa5a (48 aa).

4 disulfide bridges follow: C3–C16, C10–C21, C15–C32, and C23–C30.

This sequence belongs to the neurotoxin 02 (plectoxin) family. As to expression, expressed by the venom gland.

It localises to the secreted. The toxin blocks voltage-gated calcium channels in rat cerebellar granule cells (IC(50)=200 nM). The chain is Omega-agatoxin-Aa5a from Agelenopsis aperta (North American funnel-web spider).